We begin with the raw amino-acid sequence, 847 residues long: Follistatin-related protein 5 (847 aa).

The first 20 residues, 1-20, serve as a signal peptide directing secretion; sequence MFRCWSAILILGFIFLASEG. The 55-residue stretch at 81 to 135 folds into the Kazal-like domain; sequence ETRHAECACMDLCKQHYKPVCGSDGEFYENHCEVHRAACLKKQKITIVHNEDCFF. Intrachain disulfides connect C87–C119, C93–C112, and C101–C133. 2 EF-hand domains span residues 175 to 210 and 211 to 246; these read RKKP…EELN and KDLS…QVIQ. 9 residues coordinate Ca(2+): D188, D190, N192, E199, D226, N228, D230, H232, and E237. 2 consecutive Ig-like domains span residues 250–338 and 341–426; these read PEDQ…FQVN and PVIR…EDIS. Intrachain disulfides connect C270/C321 and C362/C413. N-linked (GlcNAc...) asparagine glycosylation is found at N318 and N394.

The protein resides in the secreted. The polypeptide is Follistatin-related protein 5 (Fstl5) (Mus musculus (Mouse)).